The primary structure comprises 331 residues: Glucokinase (331 aa).

14–19 contacts ATP; sequence GDIGGT.

Belongs to the bacterial glucokinase family.

Its subcellular location is the cytoplasm. It catalyses the reaction D-glucose + ATP = D-glucose 6-phosphate + ADP + H(+). This Aromatoleum aromaticum (strain DSM 19018 / LMG 30748 / EbN1) (Azoarcus sp. (strain EbN1)) protein is Glucokinase.